The chain runs to 338 residues: 1-aminocyclopropane-1-carboxylate deaminase (338 aa).

Lys51 is subject to N6-(pyridoxal phosphate)lysine. Ser78 functions as the Nucleophile in the catalytic mechanism.

It belongs to the ACC deaminase/D-cysteine desulfhydrase family. As to quaternary structure, homotrimer. Pyridoxal 5'-phosphate serves as cofactor.

The enzyme catalyses 1-aminocyclopropane-1-carboxylate + H2O = 2-oxobutanoate + NH4(+). In terms of biological role, catalyzes a cyclopropane ring-opening reaction, the irreversible conversion of 1-aminocyclopropane-1-carboxylate (ACC) to ammonia and alpha-ketobutyrate. Allows growth on ACC as a nitrogen source. The sequence is that of 1-aminocyclopropane-1-carboxylate deaminase from Paraburkholderia phytofirmans (strain DSM 17436 / LMG 22146 / PsJN) (Burkholderia phytofirmans).